A 104-amino-acid chain; its full sequence is Cell division protein FtsB (104 aa).

Topologically, residues 1 to 3 (MGK) are cytoplasmic. The helical transmembrane segment at 4–21 (LTLLLLVLLGWLQYSLWL) threads the bilayer. Over 22–104 (GKNGIHDYTR…NAQQGRPASQ (83 aa)) the chain is Periplasmic. The stretch at 33–62 (DEDVASQQGNNAKLKARNDRLFAEIDDLNG) forms a coiled coil.

Belongs to the FtsB family. As to quaternary structure, part of a complex composed of FtsB, FtsL and FtsQ.

Its subcellular location is the cell inner membrane. Functionally, essential cell division protein. May link together the upstream cell division proteins, which are predominantly cytoplasmic, with the downstream cell division proteins, which are predominantly periplasmic. This Erwinia tasmaniensis (strain DSM 17950 / CFBP 7177 / CIP 109463 / NCPPB 4357 / Et1/99) protein is Cell division protein FtsB.